The primary structure comprises 218 residues: N-(5'-phosphoribosyl)anthranilate isomerase (218 aa).

It belongs to the TrpF family.

The enzyme catalyses N-(5-phospho-beta-D-ribosyl)anthranilate = 1-(2-carboxyphenylamino)-1-deoxy-D-ribulose 5-phosphate. The protein operates within amino-acid biosynthesis; L-tryptophan biosynthesis; L-tryptophan from chorismate: step 3/5. The protein is N-(5'-phosphoribosyl)anthranilate isomerase of Desulfatibacillum aliphaticivorans.